A 407-amino-acid polypeptide reads, in one-letter code: Elongation factor Tu (407 aa).

The tr-type G domain maps to lysine 10–glutamate 217. Residues glycine 19 to threonine 26 form a G1 region. Glycine 19–threonine 26 contacts GTP. Threonine 26 contacts Mg(2+). The segment at glycine 60–alanine 64 is G2. Residues aspartate 81–glycine 84 form a G3 region. GTP-binding positions include aspartate 81–histidine 85 and asparagine 136–aspartate 139. The G4 stretch occupies residues asparagine 136–aspartate 139. Residues serine 184 to leucine 186 form a G5 region.

The protein belongs to the TRAFAC class translation factor GTPase superfamily. Classic translation factor GTPase family. EF-Tu/EF-1A subfamily. As to quaternary structure, monomer.

It localises to the cytoplasm. It catalyses the reaction GTP + H2O = GDP + phosphate + H(+). In terms of biological role, GTP hydrolase that promotes the GTP-dependent binding of aminoacyl-tRNA to the A-site of ribosomes during protein biosynthesis. The chain is Elongation factor Tu from Saccharophagus degradans (strain 2-40 / ATCC 43961 / DSM 17024).